A 336-amino-acid chain; its full sequence is tRNA N6-adenosine threonylcarbamoyltransferase (336 aa).

Residues His112 and His116 each contribute to the Fe cation site. Substrate is bound by residues 136–140, Asp169, Gly182, and Asn276; that span reads LVSGG. Position 304 (Asp304) interacts with Fe cation.

It belongs to the KAE1 / TsaD family. Requires Fe(2+) as cofactor.

Its subcellular location is the cytoplasm. The catalysed reaction is L-threonylcarbamoyladenylate + adenosine(37) in tRNA = N(6)-L-threonylcarbamoyladenosine(37) in tRNA + AMP + H(+). Its function is as follows. Required for the formation of a threonylcarbamoyl group on adenosine at position 37 (t(6)A37) in tRNAs that read codons beginning with adenine. Is involved in the transfer of the threonylcarbamoyl moiety of threonylcarbamoyl-AMP (TC-AMP) to the N6 group of A37, together with TsaE and TsaB. TsaD likely plays a direct catalytic role in this reaction. This Francisella tularensis subsp. holarctica (strain FTNF002-00 / FTA) protein is tRNA N6-adenosine threonylcarbamoyltransferase.